The primary structure comprises 183 residues: uncharacterized protein (183 aa).

A run of 4 helical transmembrane segments spans residues 37-59 (LFGY…PRQF), 79-98 (AILL…VTSV), 110-132 (WRTF…VLVL), and 142-161 (AFYA…TYVF).

Its subcellular location is the cell membrane. This is an uncharacterized protein from Archaeoglobus fulgidus (strain ATCC 49558 / DSM 4304 / JCM 9628 / NBRC 100126 / VC-16).